The primary structure comprises 363 residues: tRNA/tmRNA (uracil-C(5))-methyltransferase (363 aa).

S-adenosyl-L-methionine contacts are provided by glutamine 187, tyrosine 215, asparagine 220, glutamate 236, and aspartate 296. Cysteine 321 acts as the Nucleophile in catalysis. Glutamate 355 (proton acceptor) is an active-site residue.

Belongs to the class I-like SAM-binding methyltransferase superfamily. RNA M5U methyltransferase family. TrmA subfamily.

It catalyses the reaction uridine(54) in tRNA + S-adenosyl-L-methionine = 5-methyluridine(54) in tRNA + S-adenosyl-L-homocysteine + H(+). The catalysed reaction is uridine(341) in tmRNA + S-adenosyl-L-methionine = 5-methyluridine(341) in tmRNA + S-adenosyl-L-homocysteine + H(+). Its function is as follows. Dual-specificity methyltransferase that catalyzes the formation of 5-methyluridine at position 54 (m5U54) in all tRNAs, and that of position 341 (m5U341) in tmRNA (transfer-mRNA). This is tRNA/tmRNA (uracil-C(5))-methyltransferase from Pseudomonas aeruginosa (strain LESB58).